A 129-amino-acid chain; its full sequence is Large ribosomal subunit protein bL20 (129 aa).

The protein belongs to the bacterial ribosomal protein bL20 family.

Binds directly to 23S ribosomal RNA and is necessary for the in vitro assembly process of the 50S ribosomal subunit. It is not involved in the protein synthesizing functions of that subunit. The sequence is that of Large ribosomal subunit protein bL20 from Mycobacterium leprae (strain Br4923).